Reading from the N-terminus, the 88-residue chain is Low calcium response locus protein S (88 aa).

It belongs to the transposase 8 family.

The protein is Low calcium response locus protein S (lcrS) of Yersinia pestis.